The chain runs to 427 residues: Mitochondrial distribution and morphology protein 12 (427 aa).

Positions 1–387 (MSFDINWNQL…WPSWICIDMN (387 aa)) constitute an SMP-LTD domain. The span at 81–96 (NDSKDEHLKNHGDGIN) shows a compositional bias: basic and acidic residues. Disordered stretches follow at residues 81–168 (NDSK…APPL) and 387–427 (NDDD…EAGE). Residues 106-133 (LDDEDEDDEDDDEDDEDEEEEDEDDYDD) show a composition bias toward acidic residues. The segment covering 146 to 161 (LNFNENSTTPSANSFA) has biased composition (polar residues). Residues 387-402 (NDDDDEEEEEESEDND) show a composition bias toward acidic residues. Residues 411–427 (NDGKHGDGRTDETEAGE) show a composition bias toward basic and acidic residues.

Belongs to the MDM12 family. Component of the ER-mitochondria encounter structure (ERMES) or MDM complex, composed of MMM1, MDM10, MDM12 and MDM34. An MMM1 homodimer associates with one molecule of MDM12 on each side in a pairwise head-to-tail manner, and the SMP-LTD domains of MMM1 and MDM12 generate a continuous hydrophobic tunnel for phospholipid trafficking.

It localises to the mitochondrion outer membrane. Its subcellular location is the endoplasmic reticulum membrane. In terms of biological role, component of the ERMES/MDM complex, which serves as a molecular tether to connect the endoplasmic reticulum (ER) and mitochondria. Components of this complex are involved in the control of mitochondrial shape and protein biogenesis, and function in nonvesicular lipid trafficking between the ER and mitochondria. MDM12 is required for the interaction of the ER-resident membrane protein MMM1 and the outer mitochondrial membrane-resident beta-barrel protein MDM10. The MDM12-MMM1 subcomplex functions in the major beta-barrel assembly pathway that is responsible for biogenesis of all mitochondrial outer membrane beta-barrel proteins, and acts in a late step after the SAM complex. The MDM10-MDM12-MMM1 subcomplex further acts in the TOM40-specific pathway after the action of the MDM12-MMM1 complex. Essential for establishing and maintaining the structure of mitochondria and maintenance of mtDNA nucleoids. The chain is Mitochondrial distribution and morphology protein 12 from Candida albicans (strain WO-1) (Yeast).